A 189-amino-acid polypeptide reads, in one-letter code: UPF0301 protein RPR_01165 (189 aa).

It belongs to the UPF0301 (AlgH) family.

This Rickettsia peacockii (strain Rustic) protein is UPF0301 protein RPR_01165.